The following is a 493-amino-acid chain: NADH-quinone oxidoreductase subunit N (493 aa).

14 helical membrane passes run Ala8 to Ile28, Leu34 to Ser54, Gly71 to Ala91, Glu102 to His122, Leu123 to Tyr143, Tyr157 to Gly177, Ala200 to Phe220, Pro232 to Leu252, Phe266 to Leu286, Leu294 to Gly314, Ile325 to Ala345, Ala370 to Val390, Trp405 to Leu427, and Pro443 to Pro463. A disordered region spans residues Val473–Pro493.

This sequence belongs to the complex I subunit 2 family. In terms of assembly, NDH-1 is composed of 14 different subunits. Subunits NuoA, H, J, K, L, M, N constitute the membrane sector of the complex.

Its subcellular location is the cell inner membrane. The enzyme catalyses a quinone + NADH + 5 H(+)(in) = a quinol + NAD(+) + 4 H(+)(out). In terms of biological role, NDH-1 shuttles electrons from NADH, via FMN and iron-sulfur (Fe-S) centers, to quinones in the respiratory chain. The immediate electron acceptor for the enzyme in this species is believed to be ubiquinone. Couples the redox reaction to proton translocation (for every two electrons transferred, four hydrogen ions are translocated across the cytoplasmic membrane), and thus conserves the redox energy in a proton gradient. This chain is NADH-quinone oxidoreductase subunit N, found in Methylococcus capsulatus (strain ATCC 33009 / NCIMB 11132 / Bath).